Consider the following 92-residue polypeptide: Small ribosomal subunit protein uS17 (92 aa).

The protein belongs to the universal ribosomal protein uS17 family. Part of the 30S ribosomal subunit.

One of the primary rRNA binding proteins, it binds specifically to the 5'-end of 16S ribosomal RNA. This is Small ribosomal subunit protein uS17 from Corynebacterium urealyticum (strain ATCC 43042 / DSM 7109).